A 245-amino-acid polypeptide reads, in one-letter code: 1-(5-phosphoribosyl)-5-[(5-phosphoribosylamino)methylideneamino] imidazole-4-carboxamide isomerase (245 aa).

Aspartate 7 (proton acceptor) is an active-site residue. The Proton donor role is filled by aspartate 129.

It belongs to the HisA/HisF family.

The protein resides in the cytoplasm. It catalyses the reaction 1-(5-phospho-beta-D-ribosyl)-5-[(5-phospho-beta-D-ribosylamino)methylideneamino]imidazole-4-carboxamide = 5-[(5-phospho-1-deoxy-D-ribulos-1-ylimino)methylamino]-1-(5-phospho-beta-D-ribosyl)imidazole-4-carboxamide. The protein operates within amino-acid biosynthesis; L-histidine biosynthesis; L-histidine from 5-phospho-alpha-D-ribose 1-diphosphate: step 4/9. The polypeptide is 1-(5-phosphoribosyl)-5-[(5-phosphoribosylamino)methylideneamino] imidazole-4-carboxamide isomerase (Escherichia coli (strain ATCC 8739 / DSM 1576 / NBRC 3972 / NCIMB 8545 / WDCM 00012 / Crooks)).